The chain runs to 220 residues: Uracil-DNA glycosylase (220 aa).

D65 serves as the catalytic Proton acceptor.

This sequence belongs to the uracil-DNA glycosylase (UDG) superfamily. UNG family.

It is found in the cytoplasm. It carries out the reaction Hydrolyzes single-stranded DNA or mismatched double-stranded DNA and polynucleotides, releasing free uracil.. Functionally, excises uracil residues from the DNA which can arise as a result of misincorporation of dUMP residues by DNA polymerase or due to deamination of cytosine. The sequence is that of Uracil-DNA glycosylase from Amoebophilus asiaticus (strain 5a2).